The following is a 351-amino-acid chain: Flagellar P-ring protein (351 aa).

An N-terminal signal peptide occupies residues 1–20 (MKKILFLFTASLLLHVTLQA).

The protein belongs to the FlgI family. The basal body constitutes a major portion of the flagellar organelle and consists of four rings (L,P,S, and M) mounted on a central rod.

Its subcellular location is the periplasm. It localises to the bacterial flagellum basal body. Functionally, assembles around the rod to form the L-ring and probably protects the motor/basal body from shearing forces during rotation. This Sulfurimonas denitrificans (strain ATCC 33889 / DSM 1251) (Thiomicrospira denitrificans (strain ATCC 33889 / DSM 1251)) protein is Flagellar P-ring protein.